The sequence spans 118 residues: Small ribosomal subunit protein uS12cz/uS12cy (118 aa).

It belongs to the universal ribosomal protein uS12 family. In terms of assembly, part of the 30S ribosomal subunit.

The protein resides in the plastid. Its subcellular location is the chloroplast. Its function is as follows. With S4 and S5 plays an important role in translational accuracy. Located at the interface of the 30S and 50S subunits. The chain is Small ribosomal subunit protein uS12cz/uS12cy (rps12-A) from Helianthus annuus (Common sunflower).